We begin with the raw amino-acid sequence, 220 residues long: MKFRLAAVAAAALLASSASFAGMVTGSSNIDFLAVDGQKANRSLLKETRSFNINDTHTHQVVVRVSELIREGSDRTLFESDPIVVTFQGSTEDIRISAPRLTNEREANNFKANPKITVKTVSGAEIASKQDYLKQEGFLPGVNLEENLSNYNQSGATASVAGFATASMPATVGTVQNGKVKKGKVTVQGENAAEQMLQYWYQQADKETQERFLNWVKTQK.

Residues 1 to 21 (MKFRLAAVAAAALLASSASFA) form the signal peptide.

The protein belongs to the UPF0319 family.

In Actinobacillus succinogenes (strain ATCC 55618 / DSM 22257 / CCUG 43843 / 130Z), this protein is UPF0319 protein Asuc_1002.